Consider the following 203-residue polypeptide: MPPRRGIEVRQAVGDGAAPRWRMSLLENTFSSFLQSIGGGVAADGAAARAVFGEGSLFSPFLFGKFFDPADAFPLWEFEPEVLLAALRRGARTTVDWAETDSEYYLRADIPGGRKCDVEVSGDDAMRVVDVSGLWRAAPPPPPPDGRDWRAGRWWEHGFVRRVELPEDADWRKVEAFFDDGEGLLEIKVPKSGDAHQAAAATA.

The 118-residue stretch at 86–203 (ALRRGARTTV…DAHQAAAATA (118 aa)) folds into the sHSP domain.

The protein belongs to the small heat shock protein (HSP20) family. May form oligomeric structures.

The protein localises to the cytoplasm. The polypeptide is 22.3 kDa class VI heat shock protein (HSP22.3) (Oryza sativa subsp. japonica (Rice)).